The following is a 347-amino-acid chain: NADH-ubiquinone oxidoreductase chain 2 (347 aa).

10 helical membrane passes run 3–23 (PPIL…VLTS), 25–45 (HWLT…PILM), 60–80 (LLTQ…NLMF), 96–116 (AMVT…FWVP), 149–169 (IDPN…GWGG), 178–198 (ILAY…LYNP), 200–220 (MMLL…MLFM), 237–257 (APLI…LPPL), 274–294 (EMII…YFYM), and 323–343 (MILL…TPLL).

This sequence belongs to the complex I subunit 2 family. As to quaternary structure, core subunit of respiratory chain NADH dehydrogenase (Complex I) which is composed of 45 different subunits. Interacts with TMEM242.

The protein localises to the mitochondrion inner membrane. The enzyme catalyses a ubiquinone + NADH + 5 H(+)(in) = a ubiquinol + NAD(+) + 4 H(+)(out). Functionally, core subunit of the mitochondrial membrane respiratory chain NADH dehydrogenase (Complex I) which catalyzes electron transfer from NADH through the respiratory chain, using ubiquinone as an electron acceptor. Essential for the catalytic activity and assembly of complex I. The chain is NADH-ubiquinone oxidoreductase chain 2 from Mungos mungo (Banded mongoose).